A 266-amino-acid polypeptide reads, in one-letter code: MKEMKVIIAGPRGRMGHEAVLLMERTEHFNLVAAVDYKHGGEKISDLPGMPALDAPIYADLHTCLEEVEADVLLDLTTPEVGKQHVTLAVERGLRSVIGTTGFTEEELKQLTETAKEKAVGTIIAPNFAIGAVLMMKFSQMAAKYFQDVEVIELHHDQKLDAPSGTAVKTVELIRQNRESKQQGHPNEVEQLEGARGANVDGIHIHSVRLPGLIAHQEVMFGGDGQMLTVRHDSFNRASFMSGVKLSIETVMNLDHLVYGLENIID.

Residue 10 to 15 (GPRGRM) coordinates NAD(+). An NADP(+)-binding site is contributed by lysine 38. NAD(+) is bound by residues 99-101 (GTT) and 125-128 (APNF). Histidine 155 serves as the catalytic Proton donor/acceptor. (S)-2,3,4,5-tetrahydrodipicolinate is bound at residue histidine 156. The active-site Proton donor is lysine 159. 165 to 166 (GT) is a (S)-2,3,4,5-tetrahydrodipicolinate binding site.

It belongs to the DapB family.

The protein localises to the cytoplasm. The catalysed reaction is (S)-2,3,4,5-tetrahydrodipicolinate + NAD(+) + H2O = (2S,4S)-4-hydroxy-2,3,4,5-tetrahydrodipicolinate + NADH + H(+). The enzyme catalyses (S)-2,3,4,5-tetrahydrodipicolinate + NADP(+) + H2O = (2S,4S)-4-hydroxy-2,3,4,5-tetrahydrodipicolinate + NADPH + H(+). Its pathway is amino-acid biosynthesis; L-lysine biosynthesis via DAP pathway; (S)-tetrahydrodipicolinate from L-aspartate: step 4/4. Functionally, catalyzes the conversion of 4-hydroxy-tetrahydrodipicolinate (HTPA) to tetrahydrodipicolinate. The protein is 4-hydroxy-tetrahydrodipicolinate reductase of Bacillus thuringiensis subsp. konkukian (strain 97-27).